A 322-amino-acid polypeptide reads, in one-letter code: Protein mono-ADP-ribosyltransferase PARP16 (322 aa).

The Cytoplasmic portion of the chain corresponds to 1–287 (MQLSNRAAAR…RASSQLSWLS (287 aa)). In terms of domain architecture, PARP alpha-helical spans 5-91 (NRAAAREAAS…AWDLVSWILS (87 aa)). The PARP catalytic domain occupies 94-279 (ILTIHSAKKA…VYSQKQPKRA (186 aa)). Residues H152, Y182, and Y254 each contribute to the NAD(+) site. Residues 288–308 (SHWFVIMMSLYLLLLLIVSVT) form a helical membrane-spanning segment. Residues 309–322 (NSSVFHHFWNRVKR) are Lumenal-facing.

The protein belongs to the ARTD/PARP family. Interacts with KPNB1. Post-translationally, auto-mono-ADP-ribosylated.

It localises to the endoplasmic reticulum membrane. It carries out the reaction L-aspartyl-[protein] + NAD(+) = 4-O-(ADP-D-ribosyl)-L-aspartyl-[protein] + nicotinamide. The enzyme catalyses L-lysyl-[protein] + NAD(+) = N(6)-(ADP-D-ribosyl)-L-lysyl-[protein] + nicotinamide + H(+). It catalyses the reaction L-glutamyl-[protein] + NAD(+) = 5-O-(ADP-D-ribosyl)-L-glutamyl-[protein] + nicotinamide. With respect to regulation, in absence of activation signal, PARP16 is autoinhibited by the PARP alpha-helical domain (also named HD region), which prevents effective NAD(+)-binding. Activity is highly stimulated by signals, which unfold the PARP alpha-helical domain, relieving autoinhibition. Functionally, intracellular mono-ADP-ribosyltransferase that plays a role in different processes, such as protein translation and unfolded protein response (UPR), through the mono-ADP-ribosylation of proteins involved in those processes. Acts as an inhibitor of protein translation by catalyzing mono-ADP-ribosylation of ribosomal subunits, such as RPL14 and RPS6, thereby inhibiting polysome assembly and mRNA loading. Mono-ADP-ribosylation of ribosomal subunits is promoted by NMNAT2. Involved in the unfolded protein response (UPR) by ADP-ribosylating and activating EIF2AK3 and ERN1, two important UPR effectors. May also mediate mono-ADP-ribosylation of karyopherin KPNB1 a nuclear import factor. May not modify proteins on arginine or cysteine residues compared to other mono-ADP-ribosyltransferases. The polypeptide is Protein mono-ADP-ribosyltransferase PARP16 (Mus musculus (Mouse)).